The sequence spans 1235 residues: Ubiquitin carboxyl-terminal hydrolase 40 (1235 aa).

Residues S41–S482 enclose the USP domain. Catalysis depends on C50, which acts as the Nucleophile. The active-site Proton acceptor is H305. Residues I1180–K1190 are compositionally biased toward basic and acidic residues. A disordered region spans residues I1180–R1235. Residues E1205–E1215 show a composition bias toward polar residues.

The protein belongs to the peptidase C19 family. As to expression, broadly expressed.

It carries out the reaction Thiol-dependent hydrolysis of ester, thioester, amide, peptide and isopeptide bonds formed by the C-terminal Gly of ubiquitin (a 76-residue protein attached to proteins as an intracellular targeting signal).. May be catalytically inactive. This Homo sapiens (Human) protein is Ubiquitin carboxyl-terminal hydrolase 40 (USP40).